The primary structure comprises 550 residues: tRNA modification GTPase MnmE (550 aa).

3 residues coordinate (6S)-5-formyl-5,6,7,8-tetrahydrofolate: Arg20, Glu78, and Arg116. One can recognise a TrmE-type G domain in the interval 212–478 (GFSVVIVGKP…LLDKIFDIIS (267 aa)). K(+) is bound at residue Asn222. GTP contacts are provided by residues 222-227 (NVGKST), 241-247 (TDIPGTT), and 266-269 (DTAG). Ser226 contributes to the Mg(2+) binding site. K(+) is bound by residues Thr241, Ile243, and Thr246. Thr247 is a Mg(2+) binding site. Residue Lys550 coordinates (6S)-5-formyl-5,6,7,8-tetrahydrofolate.

It belongs to the TRAFAC class TrmE-Era-EngA-EngB-Septin-like GTPase superfamily. TrmE GTPase family. As to quaternary structure, homodimer. Heterotetramer of two MnmE and two MnmG subunits. It depends on K(+) as a cofactor.

It is found in the cytoplasm. Its function is as follows. Exhibits a very high intrinsic GTPase hydrolysis rate. Involved in the addition of a carboxymethylaminomethyl (cmnm) group at the wobble position (U34) of certain tRNAs, forming tRNA-cmnm(5)s(2)U34. The polypeptide is tRNA modification GTPase MnmE (Neorickettsia sennetsu (strain ATCC VR-367 / Miyayama) (Ehrlichia sennetsu)).